Here is a 1011-residue protein sequence, read N- to C-terminus: RAS protein activator like-3 (1011 aa).

The segment at 1-38 is disordered; that stretch reads MDPPSPSRTSQTQPTATSPLTSYRWHTGGGGEKAAGGF. A compositionally biased stretch (low complexity) spans 7 to 22; it reads SRTSQTQPTATSPLTS. A phosphoserine mark is found at Ser18 and Ser51. Disordered stretches follow at residues 52-136, 151-197, and 209-230; these read HQEP…PVWD, GGEE…GPNQ, and KEKK…GSRE. Residues 81–95 show a composition bias toward basic residues; the sequence is SRLRLSKALWGRHKN. Residues 100-117 show a composition bias toward acidic residues; the sequence is PDPEPEQEAPELEPEPEL. Residues 118 to 131 are compositionally biased toward pro residues; the sequence is EPPTPQIPEAPTPN. Ser164, Ser166, Ser167, and Ser170 each carry phosphoserine. Residues 179 to 190 show a composition bias toward basic and acidic residues; that stretch reads RDPDRMPGKTEP. One can recognise a PH domain in the interval 197-293; that stretch reads QVHNVRGLLK…WIEDLRRQFQ (97 aa). Phosphoserine occurs at positions 224, 228, and 231. The residue at position 234 (Thr234) is a Phosphothreonine. The 121-residue stretch at 284-404 folds into the C2 domain; sequence WIEDLRRQFQ…APAAGLERWF (121 aa). The region spanning 474-682 is the Ras-GAP domain; sequence GRAQALVTDL…PAMQCFLDQV (209 aa). Disordered stretches follow at residues 756–885 and 987–1011; these read QVHS…LGTH and LSPR…GDTT. A phosphoserine mark is found at Ser787 and Ser790. Residues 792–808 are compositionally biased toward basic and acidic residues; the sequence is RRSESWARPRPDEERPL. Composition is skewed to polar residues over residues 871–882 and 987–999; these read QMDQPQDRNQAL and LSPR…SQPQ. The stretch at 888-988 forms a coiled coil; sequence VNKLAELQCE…RDAVQSLQLS (101 aa). Ser988 carries the phosphoserine modification.

Predominantly expressed in cells of hematopoietic lineages.

Its subcellular location is the cytoplasm. The protein resides in the cell cortex. Functionally, functions as a Ras GTPase-activating protein. Plays an important role in the expansion and functions of natural killer T (NKT) cells in the liver by negatively regulating RAS activity and the down-stream ERK signaling pathway. In Homo sapiens (Human), this protein is RAS protein activator like-3 (RASAL3).